The primary structure comprises 506 residues: Maturase K (506 aa).

It belongs to the intron maturase 2 family. MatK subfamily.

It localises to the plastid. The protein resides in the chloroplast. Its function is as follows. Usually encoded in the trnK tRNA gene intron. Probably assists in splicing its own and other chloroplast group II introns. This is Maturase K from Andromeda polifolia (Bog rosemary).